The sequence spans 2171 residues: Mediator of DNA damage checkpoint protein 1 (2171 aa).

The span at 1 to 19 (MEDTQAIDWDVEEEEETEQ) shows a compositional bias: acidic residues. Residues 1-22 (MEDTQAIDWDVEEEEETEQSSE) are disordered. Residues 1-150 (MEDTQAIDWD…SRGPLTVEET (150 aa)) are interaction with CHEK2. The tract at residues 2–220 (EDTQAIDWDV…PFAFNLNSDT (219 aa)) is interaction with the MRN complex. T4 is modified (phosphothreonine). One can recognise an FHA domain in the interval 54-105 (NVVGRMPDCSVALPFPSISKQHAEIEILAWDKAPILRDCGSLNGTQILRPPK). The residue at position 108 (S108) is a Phosphoserine. A required for nuclear localization (NLS1) region spans residues 145–568 (LTVEETPRVQ…PAKLLVVSLE (424 aa)). T146 carries the phosphothreonine modification. 4 positions are modified to phosphoserine: S168, S176, S196, and S218. Disordered regions lie at residues 185–248 (RTTS…AKQS) and 261–317 (DQPL…AEVH). A Phosphothreonine modification is found at T220. Residues 261 to 278 (DQPLVKERDDDTKVKRGA) are compositionally biased toward basic and acidic residues. At S299 the chain carries Phosphoserine. Position 301 is a phosphothreonine (T301). The span at 306–317 (DSRPPGRPAEVH) shows a compositional bias: basic and acidic residues. S329 bears the Phosphoserine mark. The residue at position 331 (T331) is a Phosphothreonine. The interval 355–387 (GVGTRGPGAPGLAHLQESQAGSDTDVEEGKAPQ) is disordered. Phosphoserine occurs at positions 372 and 376. T378 is subject to Phosphothreonine. Phosphoserine occurs at positions 394, 397, and 402. Phosphothreonine is present on T404. S411 carries the phosphoserine modification. Disordered regions lie at residues 443 to 469 (QRSQTTTERDSDTDVEEEELPVENREA) and 481 to 522 (VRAH…VDIN). A Phosphothreonine modification is found at T449. S453 bears the Phosphoserine mark. A Phosphothreonine modification is found at T455. Phosphoserine is present on residues S485, S495, S498, S504, S505, and S513. Positions 513 to 522 (SQASTTVDIN) are enriched in polar residues. Residue T523 is modified to Phosphothreonine. S590 is subject to Phosphoserine. K616 is covalently cross-linked (Glycyl lysine isopeptide (Lys-Gly) (interchain with G-Cter in SUMO1); alternate). K616 participates in a covalent cross-link: Glycyl lysine isopeptide (Lys-Gly) (interchain with G-Cter in SUMO2); alternate. Disordered stretches follow at residues 653-689 (DTLGESTQPQREGAQVPTGREREQHVGGTKDSEDNYG) and 780-1969 (SPPR…TKLN). The span at 671–685 (GREREQHVGGTKDSE) shows a compositional bias: basic and acidic residues. Residues S780 and S793 each carry the phosphoserine modification. Position 812 is an N6-acetyllysine (K812). Basic and acidic residues-rich tracts occupy residues 819 to 844 (ETAERVGPERGPLERETEKLLPERQT), 851 to 862 (ELTKGKQDREQK), 868 to 905 (DTQRQESDKNGESASPERDRESLKVEIETSEEIQEKQV), and 914 to 951 (AFEREVERPVANRECDPAELEEKVPKVILERDTQRGEP). A phosphoserine mark is found at S955 and S998. The span at 955-964 (SQDQKGQASS) shows a compositional bias: polar residues. Residues 1016-1031 (KASRIRAAEKVSRGDQ) are compositionally biased toward basic and acidic residues. Phosphoserine is present on S1033. The segment covering 1040–1051 (PTVPEAPAPPQK) has biased composition (pro residues). Phosphoserine occurs at positions 1068 and 1086. A compositionally biased stretch (basic residues) spans 1103 to 1113 (PKPKIRTRKSS). Composition is skewed to polar residues over residues 1129-1157 (PSTSTAQPVTPKPTSQATRSRTNRSSVKT) and 1170-1187 (PCTSTDQPVTSEPTSQVT). An interaction with the PRKDC complex region spans residues 1148–1692 (SRTNRSSVKT…TNRSSVKTPE (545 aa)). T1157 is modified (phosphothreonine). At T1198 the chain carries Phosphothreonine. Residues 1210 to 1227 (QPSTSTDRPVTSEPTSHA) show a composition bias toward polar residues. S1235 is modified (phosphoserine). T1239 carries the post-translational modification Phosphothreonine. Residues 1251–1268 (QPSTSTDQPVTSEPTYQA) are compositionally biased toward polar residues. T1280 and T1302 each carry phosphothreonine. A compositionally biased stretch (low complexity) spans 1306–1318 (TSRTTRSRTNMSS). 2 stretches are compositionally biased toward polar residues: residues 1334-1350 (PSTSTEQPVTPEPTSRA) and 1375-1403 (PSTSTDQPVTPEPTSQATRGRTNRSSVKT). The segment covering 1429 to 1441 (TSRTTRSRTNMSS) has biased composition (low complexity). Positions 1457 to 1473 (PSTSTEQPVTPEPTSRA) are enriched in polar residues. Phosphoserine occurs at positions 1481 and 1482. At K1484 the chain carries N6-acetyllysine. T1485 bears the Phosphothreonine mark. A Glycyl lysine isopeptide (Lys-Gly) (interchain with G-Cter in SUMO1); alternate cross-link involves residue K1495. Residue K1495 forms a Glycyl lysine isopeptide (Lys-Gly) (interchain with G-Cter in SUMO2); alternate linkage. Composition is skewed to polar residues over residues 1498 to 1526 (PSTSTDQPVTPEPTSQATRGRTNRSSVKT), 1538 to 1557 (QPSTSTDQPVTPEPTSQVTR), and 1580 to 1596 (ASASTDQPVTSEPTSRT). 2 positions are modified to phosphothreonine: T1507 and T1548. A phosphothreonine mark is found at T1615 and T1630. Composition is skewed to polar residues over residues 1620–1649 (QPSTSTDQPVTPEPTSQATRGRTNRSSVKT) and 1661–1678 (QPSTSRNQLVTPEPTSRA). S1646 carries the post-translational modification Phosphoserine. T1649 and T1671 each carry phosphothreonine. S1686 is modified (phosphoserine). At T1690 the chain carries Phosphothreonine. A compositionally biased stretch (pro residues) spans 1693–1702 (PVVPTAPEPH). Positions 1706–1718 (STDQPVTPKLTSR) are enriched in polar residues. Phosphothreonine occurs at positions 1712, 1746, and 1753. Positions 1760 to 1771 (GGQSKTLRSSTV) are enriched in polar residues. Phosphoserine is present on S1763. The residue at position 1779 (T1779) is a Phosphothreonine. Positions 1780-1801 (PEFQSPVTTDQPISPEPITQPS) are enriched in polar residues. Positions 1780–2171 (PEFQSPVTTD…VLSPLEMSST (392 aa)) are required for nuclear localization (NLS2). A phosphoserine mark is found at S1784 and S1793. Residue K1822 forms a Glycyl lysine isopeptide (Lys-Gly) (interchain with G-Cter in SUMO2) linkage. S1857 carries the post-translational modification Phosphoserine. Residue K1872 forms a Glycyl lysine isopeptide (Lys-Gly) (interchain with G-Cter in SUMO2) linkage. T1882 is subject to Phosphothreonine. Residue S1902 is modified to Phosphoserine. The segment covering 1905–1918 (HQKQPQRGEVSQKT) has biased composition (polar residues). A Glycyl lysine isopeptide (Lys-Gly) (interchain with G-Cter in SUMO1); alternate cross-link involves residue K1922. A Glycyl lysine isopeptide (Lys-Gly) (interchain with G-Cter in SUMO2); alternate cross-link involves residue K1922. The segment covering 1929-1939 (AEKPGKEEDVV) has biased composition (basic and acidic residues). Position 1940 is a phosphothreonine (T1940). BRCT domains follow at residues 1974–2052 (APKV…EYVV) and 2073–2164 (RERR…FVLS). R2025 is modified (omega-N-methylarginine).

Homodimer. Interacts with H2AX, which requires phosphorylation of H2AX on 'Ser-139'. Interacts with the MRN complex, composed of MRE11, RAD50, and NBN. Interacts with CHEK2, which requires ATM-mediated phosphorylation of 'Thr-68' within the FHA domain of CHEK2. Interacts constitutively with the BRCA1-BARD1 complex, SMC1A and TP53BP1. Interacts with ATM and FANCD2, and these interactions are reduced upon DNA damage. Also interacts with the PRKDC complex, composed of XRCC6/KU70, XRCC5/KU80 and PRKDC/XRCC7. This interaction may be required for PRKDC autophosphorylation, which is essential for DNA double strand break (DSB) repair. When phosphorylated by ATM, interacts with RNF8 (via FHA domain). Interacts with CEP164. When phosphorylated, interacts with APTX (via FHA-like domain). Interacts (when phosphorylated) with TOPBP1; promoting TOPBP1 localization to DNA damage sites during mitosis. Interacts (when phosphorylated) with NBN; promoting NBN and MRN complex localization to DNA damage sites. In terms of processing, phosphorylated upon exposure to ionizing radiation (IR), ultraviolet radiation (UV), and hydroxyurea (HU). Phosphorylation in response to IR requires ATM, NBN, and possibly CHEK2. Also phosphorylated during the G2/M phase of the cell cycle and during activation of the mitotic spindle checkpoint. Phosphorylation at Thr-4 by ATM stabilizes and enhances homodimerization via the FHA domain. Phosphorylated at Ser-168 and Ser-196 by CK2 in response to DNA damage during mitosis, promoting interaction with TOPBP1. Phosphorylated by CK2 in response to DNA damage, promoting interaction with NBN and recruitment of the MRN complex to DNA damage sites. Post-translationally, sumoylation at Lys-1922 by PIAS4 following DNA damage promotes ubiquitin-mediated degradation. Ubiquitinated by RNF4, leading to proteasomal degradation; undergoes 'Lys-48'-linked polyubiquitination.

The protein localises to the nucleus. It is found in the chromosome. Its function is as follows. Histone reader protein required for checkpoint-mediated cell cycle arrest in response to DNA damage within both the S phase and G2/M phases of the cell cycle. Specifically recognizes and binds histone H2AX phosphorylated at 'Ser-139', a marker of DNA damage, serving as a scaffold for the recruitment of DNA repair and signal transduction proteins to discrete foci of DNA damage sites. Also required for downstream events subsequent to the recruitment of these proteins. These include phosphorylation and activation of the ATM, CHEK1 and CHEK2 kinases, and stabilization of TP53/p53 and apoptosis. ATM and CHEK2 may also be activated independently by a parallel pathway mediated by TP53BP1. Required for chromosomal stability during mitosis by promoting recruitment of TOPBP1 to DNA double strand breaks (DSBs): TOPBP1 forms filamentous assemblies that bridge MDC1 and tether broken chromosomes during mitosis. Required for the repair of DSBs via homologous recombination by promoting recruitment of NBN component of the MRN complex to DSBs. The chain is Mediator of DNA damage checkpoint protein 1 (MDC1) from Pan troglodytes (Chimpanzee).